A 137-amino-acid polypeptide reads, in one-letter code: Oleosin Ara h 11.0102 (137 aa).

The residue at position 2 (Ala-2) is an N-acetylalanine; alternate. Transmembrane regions (helical) follow at residues 27–47 (AVVAGGSLLILAGLVLAATVI) and 55–75 (LFVIFSPVLVPAVITVALLGL).

Belongs to the oleosin family. Expressed in seeds (at protein level).

It localises to the lipid droplet. Its subcellular location is the membrane. Functionally, may have a structural role to stabilize the lipid body during desiccation of the seed by preventing coalescence of the oil. Probably interacts with both lipid and phospholipid moieties of lipid bodies. May also provide recognition signals for specific lipase anchorage in lipolysis during seedling growth. This Arachis hypogaea (Peanut) protein is Oleosin Ara h 11.0102.